Consider the following 326-residue polypeptide: Phosphotriesterase homology protein (326 aa).

Zn(2+)-binding residues include His22, His24, Lys145, His178, His207, and Asp264. Lys145 is subject to N6-carboxylysine.

This sequence belongs to the metallo-dependent hydrolases superfamily. Phosphotriesterase family. Zn(2+) is required as a cofactor.

In Mycobacterium tuberculosis (strain CDC 1551 / Oshkosh), this protein is Phosphotriesterase homology protein (php).